Here is a 307-residue protein sequence, read N- to C-terminus: NAD kinase (307 aa).

Residue D85 is the Proton acceptor of the active site. Residues 85–86 (DG), R90, 159–160 (NE), D189, and 200–205 (TAYAFS) contribute to the NAD(+) site.

Belongs to the NAD kinase family. A divalent metal cation serves as cofactor.

The protein localises to the cytoplasm. It catalyses the reaction NAD(+) + ATP = ADP + NADP(+) + H(+). In terms of biological role, involved in the regulation of the intracellular balance of NAD and NADP, and is a key enzyme in the biosynthesis of NADP. Catalyzes specifically the phosphorylation on 2'-hydroxyl of the adenosine moiety of NAD to yield NADP. The sequence is that of NAD kinase from Mycobacterium bovis (strain ATCC BAA-935 / AF2122/97).